The following is a 372-amino-acid chain: MRDKVSGARRWVVKIGSALLTADGRGLDQAAMAVWVDQMVALRAAGVELVLVSSGAVAAGMSRLGWASRPKAVHELQAAAAVGQMGLIRAWESSFARCDQQTAQILVTHDDLSDRKRYLNARSTLRTLIDLGVVPVINENDTVVTDEIRFGDNDTLAALVANLVEADLLVILTDRDGMFDADPRHNPEANLISEARADDPALDAVAGGTGGALGRGGMQTKLRAARLAARSGAHTVIVGGRIEQVLSRLKAGERLGTLLAPECNRHAARKQWLAGHLQTRGTLTLDEGAVLALRQGNRSLLPVGVRAVQGAFRRGEMVVCVGPQGAEVARGLVNYSAAEAQRILGRPSDEIEKLLGYVDEPELIHRDNMILV.

Lys14 is a binding site for ATP. Substrate contacts are provided by Ser54, Asp141, and Asn153. 173 to 174 provides a ligand contact to ATP; sequence TD. The region spanning 280-358 is the PUA domain; sequence RGTLTLDEGA…DEIEKLLGYV (79 aa).

It belongs to the glutamate 5-kinase family.

The protein localises to the cytoplasm. It carries out the reaction L-glutamate + ATP = L-glutamyl 5-phosphate + ADP. The protein operates within amino-acid biosynthesis; L-proline biosynthesis; L-glutamate 5-semialdehyde from L-glutamate: step 1/2. Its function is as follows. Catalyzes the transfer of a phosphate group to glutamate to form L-glutamate 5-phosphate. The sequence is that of Glutamate 5-kinase from Stutzerimonas stutzeri (strain A1501) (Pseudomonas stutzeri).